The following is a 793-amino-acid chain: DnaJ homolog subfamily C member 10 (793 aa).

The signal sequence occupies residues Met-1 to Thr-32. Residues Asp-35 to Gly-100 form the J domain. One can recognise a Thioredoxin 1 domain in the interval Glu-130 to His-232. Cys-158 and Cys-161 are oxidised to a cystine. Trxb regions lie at residues Ser-235–Phe-350 and Pro-348–Phe-463. Thioredoxin domains lie at His-454–Leu-553, Ser-557–Ile-662, and Val-671–Lys-778. Residues Cys-480 and Cys-483 are joined by a disulfide bond. Residue Asn-530 is glycosylated (N-linked (GlcNAc...) asparagine). 2 cysteine pairs are disulfide-bonded: Cys-588–Cys-591 and Cys-700–Cys-703. The short motif at Lys-790 to Leu-793 is the Prevents secretion from ER element.

Interacts with EDEM1. Interacts with HSPA5 (via its J domain).

It is found in the endoplasmic reticulum lumen. In terms of biological role, endoplasmic reticulum disulfide reductase involved both in the correct folding of proteins and degradation of misfolded proteins. Required for efficient folding of proteins in the endoplasmic reticulum by catalyzing the removal of non-native disulfide bonds formed during the folding of proteins, such as LDLR. Also involved in endoplasmic reticulum-associated degradation (ERAD) by reducing incorrect disulfide bonds in misfolded glycoproteins recognized by EDEM1. Interaction with HSPA5 is required its activity, not for the disulfide reductase activity, but to facilitate the release of DNAJC10 from its substrate. Promotes apoptotic signaling pathway in response to endoplasmic reticulum stress. This Homo sapiens (Human) protein is DnaJ homolog subfamily C member 10 (DNAJC10).